The following is a 92-amino-acid chain: MDRYAVRTWGIVGILGCAAVGAAPTGPASDTTNATARLPTHPPLIRSGGFAVPLIVGGLCLMILGMACLLEVLRRLGRELARCCPHAGQFAP.

Positions 1-22 (MDRYAVRTWGIVGILGCAAVGA) are cleaved as a signal peptide. Residues 23–49 (APTGPASDTTNATARLPTHPPLIRSGG) are Extracellular-facing. An N-linked (GlcNAc...) asparagine; by host glycan is attached at Asn-33. Residues 50 to 70 (FAVPLIVGGLCLMILGMACLL) form a helical membrane-spanning segment. Over 71-92 (EVLRRLGRELARCCPHAGQFAP) the chain is Cytoplasmic.

This sequence belongs to the alphaherpesvirinae glycoprotein J family.

It is found in the host Golgi apparatus membrane. It localises to the host endoplasmic reticulum membrane. The protein resides in the host endosome membrane. In terms of biological role, functions as an activator of viral protein expression and virus production. In turn, promotes cell-to-cell spread as well as syncytia formation. The polypeptide is Envelope glycoprotein J (gJ) (Homo sapiens (Human)).